Consider the following 1264-residue polypeptide: Kinesin-like protein KIN-14B (1264 aa).

A compositionally biased stretch (polar residues) spans 1–10 (MAEQKSTNMW). Positions 1–52 (MAEQKSTNMWNWEVTGFESKKSPSSEEGVHRTPSSMLRRYSIPKNSLPPHSS) are disordered. The segment covering 18-30 (ESKKSPSSEEGVH) has biased composition (basic and acidic residues). The stretch at 53 to 84 (ELASKVQSLKDKVQLAKDDYVGLRQEATDLQE) forms a coiled coil. A Kinesin motor domain is found at 138 to 452 (NVKVFCRARP…LNYAARARNT (315 aa)). 219-226 (GQTHAGKT) contacts ATP. 3 coiled-coil regions span residues 462-511 (IKKW…YNEV), 545-592 (QLRN…LKSD), and 617-640 (TKKL…ENEK). Residues 588–615 (ALKSDMTRSRDPLEPQPRAAENTLDSSA) are disordered. Over residues 589-600 (LKSDMTRSRDPL) the composition is skewed to basic and acidic residues. The span at 652 to 668 (SSTQVSSPSSKASPTVQ) shows a compositional bias: low complexity. Disordered regions lie at residues 652 to 684 (SSTQ…SVDK) and 1117 to 1136 (PEQE…SISS).

Belongs to the TRAFAC class myosin-kinesin ATPase superfamily. Kinesin family. KIN-14 subfamily. In terms of assembly, homodimer and heterodimer with KCA1. Interacts with CDKA-1. Interacts with At4g14310. In terms of tissue distribution, expressed in roots, leaves, stems and flowers.

Its subcellular location is the cell membrane. Functionally, kinesin-like protein required for chloroplast movements and anchor to the plasma membrane. Mediates chloroplast movement via chloroplast actin (cp-actin) filaments. Required for the chloroplast avoidance response under high intensity blue light. Mediates redundantly with CHUP1 the nuclear avoidance response under high intensity blue light. May be involved in division plane determination. The sequence is that of Kinesin-like protein KIN-14B from Arabidopsis thaliana (Mouse-ear cress).